The chain runs to 160 residues: Sec-independent protein translocase protein TatB (160 aa).

A helical membrane pass occupies residues 1–21 (MFGMGFFEILVVLVVAIIFLG). The disordered stretch occupies residues 118 to 160 (HLNEEVSNEEALNKEVSSDESPKEVQLATDNNTKEHDKEKENV). 2 stretches are compositionally biased toward basic and acidic residues: residues 128 to 140 (ALNK…ESPK) and 149 to 160 (NTKEHDKEKENV).

This sequence belongs to the TatB family. The Tat system comprises two distinct complexes: a TatABC complex, containing multiple copies of TatA, TatB and TatC subunits, and a separate TatA complex, containing only TatA subunits. Substrates initially bind to the TatABC complex, which probably triggers association of the separate TatA complex to form the active translocon.

The protein resides in the cell inner membrane. Part of the twin-arginine translocation (Tat) system that transports large folded proteins containing a characteristic twin-arginine motif in their signal peptide across membranes. Together with TatC, TatB is part of a receptor directly interacting with Tat signal peptides. TatB may form an oligomeric binding site that transiently accommodates folded Tat precursor proteins before their translocation. The polypeptide is Sec-independent protein translocase protein TatB (Helicobacter pylori (strain ATCC 700392 / 26695) (Campylobacter pylori)).